The chain runs to 226 residues: PKHD-type hydroxylase Bind_0236 (226 aa).

Positions 78–178 (TIFPPLFNRY…RIASFFWIQS (101 aa)) constitute a Fe2OG dioxygenase domain. Fe cation is bound by residues His-96, Asp-98, and His-159. Arg-169 lines the 2-oxoglutarate pocket.

Fe(2+) is required as a cofactor. It depends on L-ascorbate as a cofactor.

This Beijerinckia indica subsp. indica (strain ATCC 9039 / DSM 1715 / NCIMB 8712) protein is PKHD-type hydroxylase Bind_0236.